The chain runs to 202 residues: LexA repressor 2 (202 aa).

Positions 28–48 form a DNA-binding region, H-T-H motif; that stretch reads LAEISEAFGFASRSVARKHIV. Active-site for autocatalytic cleavage activity residues include Ser123 and Lys160.

It belongs to the peptidase S24 family. In terms of assembly, homodimer.

It carries out the reaction Hydrolysis of Ala-|-Gly bond in repressor LexA.. Its function is as follows. Represses a number of genes involved in the response to DNA damage (SOS response), including recA and lexA. In the presence of single-stranded DNA, RecA interacts with LexA causing an autocatalytic cleavage which disrupts the DNA-binding part of LexA, leading to derepression of the SOS regulon and eventually DNA repair. In Pseudomonas syringae pv. tomato (strain ATCC BAA-871 / DC3000), this protein is LexA repressor 2.